The sequence spans 223 residues: UPF0441 protein KPK_0672 (223 aa).

A disordered region spans residues 165–223 (SYGAAQPGRTMNVPKTAMAPKPATTTTVTRGGFGESVAKQSTMQRSAAGSTSSSRSMGG). 2 stretches are compositionally biased toward low complexity: residues 177–193 (VPKT…TTVT) and 209–223 (RSAA…SMGG).

The protein belongs to the UPF0441 family.

The sequence is that of UPF0441 protein KPK_0672 from Klebsiella pneumoniae (strain 342).